Here is a 354-residue protein sequence, read N- to C-terminus: MSLFDTINSGGTQLLGVAWPTVWALVRILVVAVVILLCVAYLILWERKLIGWMHVRLGPNRVGPAGLLQPIADVLKLLLKEVIQPAQASRWIYMVAPIMVVVPAFAVWAVIPFQAGAVLGDINAGLLYAMAVSSIGVYGVILAGWASNSKYAFLGAMRAAAQMVSYEISMGFALVVVLMTAGTLNLSGIVGSQEHGFFASHGLNFLSWNWLPLLPMFVVYFISGIAETNRHPFDVVEGESEIVAGHMIDYSGMAFALFFLAEYINMIVISALAATLFLGGWSAPFGFLSFIPGIVWLVAKVFFLLSVFIWARATFPRYRYDQIMRLGWKIFIPVCVVWLVVVGFWIMSPLNIWK.

8 helical membrane passes run 25-45, 91-111, 126-146, 170-190, 205-225, 267-287, 290-310, and 330-350; these read LVRI…LILW, WIYM…WAVI, LLYA…AGWA, MGFA…SGIV, FLSW…ISGI, IVIS…PFGF, FIPG…VFIW, and IFIP…MSPL.

Belongs to the complex I subunit 1 family. In terms of assembly, NDH-1 is composed of 14 different subunits. Subunits NuoA, H, J, K, L, M, N constitute the membrane sector of the complex.

It localises to the cell inner membrane. It carries out the reaction a quinone + NADH + 5 H(+)(in) = a quinol + NAD(+) + 4 H(+)(out). Functionally, NDH-1 shuttles electrons from NADH, via FMN and iron-sulfur (Fe-S) centers, to quinones in the respiratory chain. The immediate electron acceptor for the enzyme in this species is believed to be ubiquinone. Couples the redox reaction to proton translocation (for every two electrons transferred, four hydrogen ions are translocated across the cytoplasmic membrane), and thus conserves the redox energy in a proton gradient. This subunit may bind ubiquinone. In Paraburkholderia xenovorans (strain LB400), this protein is NADH-quinone oxidoreductase subunit H.